Here is a 436-residue protein sequence, read N- to C-terminus: Coiled-coil domain-containing protein 71 (436 aa).

The tract at residues 95-119 (ATSLPARAPQTAKSVPTGQTTLLPV) is disordered. The segment covering 105-116 (TAKSVPTGQTTL) has biased composition (polar residues). Ser-129 carries the post-translational modification Phosphoserine. 2 disordered regions span residues 210–258 (LRKG…MKGR) and 314–405 (ALRG…KVDR). Residues 264-334 (KTVRGKAPRT…QAKAKAARTK (71 aa)) are a coiled coil. The segment covering 329-340 (KAARTKHKKRPK) has biased composition (basic residues). Residues 344 to 359 (QTRTGRTSLKNSSETV) are compositionally biased toward polar residues. A compositionally biased stretch (basic residues) spans 373-386 (PPKKRARCVPRSKA).

The polypeptide is Coiled-coil domain-containing protein 71 (Ccdc71) (Rattus norvegicus (Rat)).